Consider the following 296-residue polypeptide: tRNA uridine(34) hydroxylase (296 aa).

Positions 132–226 constitute a Rhodanese domain; sequence AGRPVVMLDT…YFEEVGGAHY (95 aa). Residue Cys-186 is the Cysteine persulfide intermediate of the active site.

The protein belongs to the TrhO family.

The catalysed reaction is uridine(34) in tRNA + AH2 + O2 = 5-hydroxyuridine(34) in tRNA + A + H2O. In terms of biological role, catalyzes oxygen-dependent 5-hydroxyuridine (ho5U) modification at position 34 in tRNAs. This is tRNA uridine(34) hydroxylase from Burkholderia thailandensis (strain ATCC 700388 / DSM 13276 / CCUG 48851 / CIP 106301 / E264).